Reading from the N-terminus, the 220-residue chain is MASNSEAGGSADYETLMSTSDVELLKRAWRNEKAAPEILQYEGALVDRAKEQIELVEETIEDYVENGIDPLVVSLYQMDLDRAQFLLRSYLRVRLLKIEKFMFHNLNSEEAERRLSEQEKVFATRCADDLAKHFEETVLLKLPENYQSVLKQSLISEVDDMVPQPHLDTFVVCRSKNFVSLNLYEEGESPETVEMERGDLYFIRYKIVKRAIESGQIDLI.

The protein belongs to the GINS4/SLD5 family. As to quaternary structure, component of the GINS complex. Interacts with EOL1 in the nucleus.

It is found in the nucleus. Functionally, the GINS complex plays an essential role in the initiation of DNA replication. Required during embryogenesis. The chain is DNA replication complex GINS protein SLD5 from Arabidopsis thaliana (Mouse-ear cress).